A 447-amino-acid polypeptide reads, in one-letter code: Pentatricopeptide repeat-containing protein At3g53170 (447 aa).

PPR repeat units lie at residues 93-127, 128-158, 164-198, 199-233, 235-269, 270-304, 305-339, 340-374, 375-409, and 410-444; these read RCKT…GLKP, TIDV…MKSV, DVFT…GVGC, STVT…GDSL, DVCT…GVQP, DITT…FFSL, TTVT…GVKP, NSIT…DVVL, DTPF…KCKP, and DKIT…GENL.

This sequence belongs to the PPR family. P subfamily.

This Arabidopsis thaliana (Mouse-ear cress) protein is Pentatricopeptide repeat-containing protein At3g53170.